A 137-amino-acid polypeptide reads, in one-letter code: Lysozyme (137 aa).

Positions 1–20 (MQRLLGSIVILATVFTFCEA) are cleaved as a signal peptide. An I-type lysozyme domain is found at 21-135 (TISSACLRCI…EKVHQQGCNV (115 aa)). 6 disulfide bridges follow: C26/C102, C31/C37, C42/C51, C64/C84, C74/C80, and C98/C116. E34 functions as the Proton donor in the catalytic mechanism. D45 acts as the Nucleophile in catalysis. Residue 57-63 (KENYWED) participates in substrate binding. Substrate contacts are provided by residues Y88 and 109–111 (HNG).

Belongs to the glycosyl hydrolase 22 family. Type-I lysozyme subfamily. Expressed in the basophil cells of the oyster digestive gland.

It localises to the secreted. The catalysed reaction is Hydrolysis of (1-&gt;4)-beta-linkages between N-acetylmuramic acid and N-acetyl-D-glucosamine residues in a peptidoglycan and between N-acetyl-D-glucosamine residues in chitodextrins.. Has bacteriolytic activity. May play a role in digestion and in the host defense mechanisms against invading microbes. The sequence is that of Lysozyme (lysoz) from Magallana gigas (Pacific oyster).